We begin with the raw amino-acid sequence, 574 residues long: Septation ring formation regulator EzrA (574 aa).

The Extracellular portion of the chain corresponds to 1-7; sequence MSSGIIL. The helical transmembrane segment at 8-26 threads the bilayer; that stretch reads LIVAIVLLVIIAYLVGVII. Residues 27–574 lie on the Cytoplasmic side of the membrane; that stretch reads RKRNDSLITS…YEKTREHIRF (548 aa). 3 coiled-coil regions span residues 102–141, 274–350, and 459–520; these read NFIRAKHEINSVESQLNLVEEDIASIREALNILKEQEEKN, ELVT…ETES, and QLEA…SFEA.

The protein belongs to the EzrA family.

The protein resides in the cell membrane. In terms of biological role, negative regulator of FtsZ ring formation; modulates the frequency and position of FtsZ ring formation. Inhibits FtsZ ring formation at polar sites. Interacts either with FtsZ or with one of its binding partners to promote depolymerization. The protein is Septation ring formation regulator EzrA of Streptococcus pyogenes serotype M4 (strain MGAS10750).